Consider the following 1528-residue polypeptide: Rho GTPase-activating protein 7 (1528 aa).

Disordered regions lie at residues 72-94 (DFPG…HEGE), 288-310 (MSAE…PPKV), and 372-436 (ALST…TKPK). The segment covering 81–94 (LSKDVDENDSHEGE) has biased composition (basic and acidic residues). Low complexity predominate over residues 374–384 (STSSSPSGTPT). Residues 396–436 (GSESGADTISVNQTRVNLSSDTESTDLPSSTPVANSGTKPK) are compositionally biased toward polar residues. In terms of domain architecture, SAM spans 448-515 (KAEIEAKEAC…LNKCAVMKLE (68 aa)). Residues Ser523, Ser526, and Ser566 each carry the phosphoserine modification. 4 disordered regions span residues 558 to 617 (PKQD…ATPR), 732 to 764 (RSVS…RTRS), 829 to 876 (PSGN…SSRL), and 928 to 990 (SDEG…GVGA). Composition is skewed to low complexity over residues 591-605 (VSSV…SLPS) and 734-760 (VSNS…SPVT). Positions 710–884 (QLNCVEISAL…RLSIYDNVPG (175 aa)) are focal adhesion-targeting (FAT). Ser757 is subject to Phosphoserine. Basic and acidic residues predominate over residues 851 to 862 (LRRENSSDSPKE). Over residues 936 to 948 (ALDSVSPCPSSPK) the composition is skewed to polar residues. Over residues 950-960 (IHLDVDNDRTT) the composition is skewed to basic and acidic residues. Positions 961–972 (PSDLDSTGNSLN) are enriched in polar residues. A polybasic cluster (PBR) region spans residues 1051-1073 (KHGFSWAVPKFMKRIKVPDYKDR). One can recognise a Rho-GAP domain in the interval 1078–1284 (VPLTVNVQRT…HMIAECKKLF (207 aa)). The region spanning 1314 to 1521 (GNDDSADYQH…RDSFSNQNTE (208 aa)) is the START domain.

Interacts with EF1A1, facilitates EF1A1 distribution to the membrane periphery and ruffles upon growth factor stimulation and suppresses cell migration. Interacts with tensin TNS1 (via N-terminus); the interaction is decreased by phosphorylation of TNS1. Interacts with TNS3 and PTEN; in resting cells, interacts with TNS3 (via C2 tensin-type domain) but, following growth factor stimulation, TNS3 and PTEN are phosphorylated which leads to weakened interaction with TNS3 and enhanced interaction with PTEN. Interacts (via C-terminus) with tensin TNS4 (via SH2 domain); the interaction is independent of tyrosine phosphorylation of DLC1. Highest level of expression in the spleen, with rather lower levels in prostate, testis, ovary, small intestine and colon, but none in the thymus.

The protein resides in the cytoplasm. It is found in the cell junction. The protein localises to the focal adhesion. Its subcellular location is the membrane. Functionally, functions as a GTPase-activating protein for the small GTPases RHOA, RHOB, RHOC and CDC42, terminating their downstream signaling. This induces morphological changes and detachment through cytoskeletal reorganization, playing a critical role in biological processes such as cell migration and proliferation. Also functions in vivo as an activator of the phospholipase PLCD1. Active DLC1 increases cell migration velocity but reduces directionality. Required for growth factor-induced epithelial cell migration; in resting cells, interacts with TNS3 while PTEN interacts with the p85 regulatory subunit of the PI3K kinase complex but growth factor stimulation induces phosphorylation of TNS3 and PTEN, causing them to change their binding preference so that PTEN interacts with DLC1 and TNS3 interacts with p85. The PTEN-DLC1 complex translocates to the posterior of migrating cells to activate RHOA while the TNS3-p85 complex translocates to the leading edge of migrating cells to promote RAC1 activation. In Homo sapiens (Human), this protein is Rho GTPase-activating protein 7 (DLC1).